The chain runs to 1135 residues: Exportin-6-A (1135 aa).

Residues 31–97 (IESLLNNFAQ…RNSLPKLLLS (67 aa)) form the Importin N-terminal domain.

The protein belongs to the exportin family. In terms of tissue distribution, expressed during meiotic maturation 2 hours after germinal vesicle break down (GVBD) and in unfertilized and fertilized eggs, but not in oocytes (at protein level). Expressed in somatic cells, in oocytes, during meiotic maturation and in unfertilized and fertilized eggs.

The protein resides in the nucleus. Its subcellular location is the cytoplasm. Its function is as follows. Mediates the nuclear export of actin and profilin-actin complexes in somatic cells. Oocyte nuclei lack active actin export. This Xenopus laevis (African clawed frog) protein is Exportin-6-A (xpo6-a).